The sequence spans 330 residues: Phosphate acyltransferase (330 aa).

It belongs to the PlsX family. In terms of assembly, homodimer. Probably interacts with PlsY.

The protein localises to the cytoplasm. It carries out the reaction a fatty acyl-[ACP] + phosphate = an acyl phosphate + holo-[ACP]. The protein operates within lipid metabolism; phospholipid metabolism. Catalyzes the reversible formation of acyl-phosphate (acyl-PO(4)) from acyl-[acyl-carrier-protein] (acyl-ACP). This enzyme utilizes acyl-ACP as fatty acyl donor, but not acyl-CoA. This chain is Phosphate acyltransferase, found in Bacillus cereus (strain B4264).